The chain runs to 267 residues: Serine acetyltransferase (267 aa).

The protein belongs to the transferase hexapeptide repeat family.

The protein localises to the cytoplasm. It carries out the reaction L-serine + acetyl-CoA = O-acetyl-L-serine + CoA. Its pathway is amino-acid biosynthesis; L-cysteine biosynthesis; L-cysteine from L-serine: step 1/2. The sequence is that of Serine acetyltransferase (cysE) from Haemophilus influenzae (strain ATCC 51907 / DSM 11121 / KW20 / Rd).